A 440-amino-acid polypeptide reads, in one-letter code: Transposon Ty1-NL2 Gag polyprotein (440 aa).

Composition is skewed to polar residues over residues 1–23 (MESQ…SVTS), 48–60 (TKAN…TPAS), 71–97 (SPQT…NQAN), and 129–152 (QFPQ…GNTF). Disordered regions lie at residues 1–97 (MESQ…NQAN), 129–171 (QFPQ…YVRP), and 352–440 (GSRN…PETY). Residues 153–165 (TDSSSADSDMTST) are compositionally biased toward low complexity. The tract at residues 299-401 (NNGIHINNKV…NSKSKTARAH (103 aa)) is RNA-binding. The segment covering 402–418 (NVSTSNNSPSTDNDSIS) has biased composition (low complexity). Residue Ser416 is modified to Phosphoserine. The segment covering 419-428 (KSTTEPIQLN) has biased composition (polar residues). Over residues 429–440 (NKHDLHLRPETY) the composition is skewed to basic and acidic residues.

Homotrimer.

Its subcellular location is the cytoplasm. Capsid protein (CA) is the structural component of the virus-like particle (VLP), forming the shell that encapsulates the retrotransposons dimeric RNA genome. The particles are assembled from trimer-clustered units and there are holes in the capsid shells that allow for the diffusion of macromolecules. CA also has nucleocapsid-like chaperone activity, promoting primer tRNA(i)-Met annealing to the multipartite primer-binding site (PBS), dimerization of Ty1 RNA and initiation of reverse transcription. The sequence is that of Transposon Ty1-NL2 Gag polyprotein (TY1A-NL2) from Saccharomyces cerevisiae (strain ATCC 204508 / S288c) (Baker's yeast).